Here is a 361-residue protein sequence, read N- to C-terminus: MALPGDPRRLCRLVQEGRLRDLQEELAVARGCRGPAGDTLLHCAARHGRQDILAYLVEAWSMDIEATNRDYKRPLHEAASMGHRDCVRYLLGRGAVVDSLKKADWTPLMMACTRKNLDVIQDLVEHGANPLLKNKDGWNSFHIASREGHPVILRYLLTVCPDAWKTESNIRRTPLHTAAMHGCLEAVQVLLERCHYEPDCRDNCGVTPFMDAIQCGHVSIAKLLLEQHKACSSAADSMGAQALHRAAVTGQDEAIRFLVCGLGIDVDVRAKSSQLTALHYAAKEGQTNTVQTLLSLGADINSTDERNRSVLHLACAGQHVACTRLLLQSGLKDSEDLTGTLAQQLTRSVDILQDFDHDVKS.

ANK repeat units lie at residues 36 to 66 (AGDT…DIEA), 70 to 99 (DYKR…VVDS), 103 to 132 (ADWT…NPLL), 136 to 165 (DGWN…DAWK), 170 to 200 (IRRT…EPDC), 204 to 233 (CGVT…ACSS), 238 to 268 (MGAQ…DVDV), 273 to 302 (SQLT…DINS), and 306 to 335 (RNRS…KDSE).

In terms of assembly, interacts with AARS; the interaction is direct. In terms of tissue distribution, widely expressed in brain (at protein level).

It is found in the cytoplasm. The protein localises to the nucleus. Functionally, required to prevent the misactivation of serine (Ser) with tRNA(Ala) by promoting the hydrolysis of Ser-mischarged tRNA(Ala), thereby playing a role in translational fidelity. Binds directly to the catalytic domain of AARS/AlaRS and captures Ser that is misactivated by AARS/AlaRS, preventing the charging of Ser adenylates to tRNA(Ala) and precluding Ser misincorporation in nascent peptides. The polypeptide is Ankyrin repeat domain-containing protein 16 (Mus musculus (Mouse)).